Here is a 364-residue protein sequence, read N- to C-terminus: Pyrimidine monooxygenase RutA (364 aa).

FMN contacts are provided by residues 49–50, Asn115, Glu124, 140–141, and Ser190; these read IK and RY.

This sequence belongs to the NtaA/SnaA/DszA monooxygenase family. RutA subfamily.

The catalysed reaction is uracil + FMNH2 + NADH + O2 = (Z)-3-ureidoacrylate + FMN + NAD(+) + H2O + H(+). It catalyses the reaction thymine + FMNH2 + NADH + O2 = (Z)-2-methylureidoacrylate + FMN + NAD(+) + H2O + H(+). In terms of biological role, catalyzes the pyrimidine ring opening between N-3 and C-4 by an unusual flavin hydroperoxide-catalyzed mechanism, adding oxygen atoms in the process to yield ureidoacrylate peracid, that immediately reacts with FMN forming ureidoacrylate and FMN-N(5)-oxide. The FMN-N(5)-oxide reacts spontaneously with NADH to produce FMN. Requires the flavin reductase RutF to regenerate FMN in vivo. This chain is Pyrimidine monooxygenase RutA, found in Methylorubrum extorquens (strain ATCC 14718 / DSM 1338 / JCM 2805 / NCIMB 9133 / AM1) (Methylobacterium extorquens).